A 224-amino-acid polypeptide reads, in one-letter code: Toxin coregulated pilin (224 aa).

Positions 1 to 25 are cleaved as a propeptide — atypical leader sequence; the sequence is MQLLKQLFKKKFVKEEHDKKTGQEG. Met-26 is subject to N-methylmethionine. A helical transmembrane segment spans residues 26–46; it reads MTLLEVIIVLGIMGVVSAGVV. A disulfide bridge connects residues Cys-145 and Cys-211.

It localises to the fimbrium. The protein localises to the membrane. Major component of the toxin co-regulated pilus (tcp) which is a type IV pilus essential for bacterial aggregation and subsequent colonization in the host small intestine. The chain is Toxin coregulated pilin (tcpA) from Vibrio cholerae.